Reading from the N-terminus, the 132-residue chain is DNA-directed RNA polymerase subunit Rpo8 (132 aa).

This sequence belongs to the archaeal Rpo8 RNA polymerase subunit family. As to quaternary structure, part of the 13-subunit RNA polymerase complex.

It localises to the cytoplasm. The catalysed reaction is RNA(n) + a ribonucleoside 5'-triphosphate = RNA(n+1) + diphosphate. Functionally, DNA-dependent RNA polymerase (RNAP) catalyzes the transcription of DNA into RNA using the four ribonucleoside triphosphates as substrates. This is DNA-directed RNA polymerase subunit Rpo8 from Saccharolobus solfataricus (strain ATCC 35092 / DSM 1617 / JCM 11322 / P2) (Sulfolobus solfataricus).